Reading from the N-terminus, the 133-residue chain is Phosphoribosyl-AMP cyclohydrolase (133 aa).

Asp77 serves as a coordination point for Mg(2+). Cys78 is a Zn(2+) binding site. Mg(2+) contacts are provided by Asp79 and Asp81. The Zn(2+) site is built by Cys95 and Cys102.

Belongs to the PRA-CH family. Homodimer. Requires Mg(2+) as cofactor. Zn(2+) serves as cofactor.

The protein resides in the cytoplasm. It carries out the reaction 1-(5-phospho-beta-D-ribosyl)-5'-AMP + H2O = 1-(5-phospho-beta-D-ribosyl)-5-[(5-phospho-beta-D-ribosylamino)methylideneamino]imidazole-4-carboxamide. It participates in amino-acid biosynthesis; L-histidine biosynthesis; L-histidine from 5-phospho-alpha-D-ribose 1-diphosphate: step 3/9. Its function is as follows. Catalyzes the hydrolysis of the adenine ring of phosphoribosyl-AMP. The sequence is that of Phosphoribosyl-AMP cyclohydrolase from Azotobacter chroococcum mcd 1.